A 299-amino-acid chain; its full sequence is Acetylglutamate kinase (299 aa).

Substrate-binding positions include 70-71 (GG), R92, and N186.

It belongs to the acetylglutamate kinase family. ArgB subfamily.

Its subcellular location is the cytoplasm. The catalysed reaction is N-acetyl-L-glutamate + ATP = N-acetyl-L-glutamyl 5-phosphate + ADP. It participates in amino-acid biosynthesis; L-arginine biosynthesis; N(2)-acetyl-L-ornithine from L-glutamate: step 2/4. In terms of biological role, catalyzes the ATP-dependent phosphorylation of N-acetyl-L-glutamate. The chain is Acetylglutamate kinase from Caldanaerobacter subterraneus subsp. tengcongensis (strain DSM 15242 / JCM 11007 / NBRC 100824 / MB4) (Thermoanaerobacter tengcongensis).